A 447-amino-acid chain; its full sequence is Beclin-1 (447 aa).

Low complexity predominate over residues 44 to 53 (PPLTAAPARP). The disordered stretch occupies residues 44-71 (PPLTAAPARPGDAQEESALSEEAFTEGR). The short motif at 105 to 124 (TMENLSRRLKVTGDLFDIMS) is the BH3 element. The stretch at 139 to 266 (DTLLDQLDTQ…QLDKLKKTNV (128 aa)) forms a coiled coil. Residues 242–447 (DELKSVENQM…AWVSSQFYNK (206 aa)) are evolutionary conserved domain (ECD). The interval 422–447 (WTKALKFMLTNLKWGLAWVSSQFYNK) is required for membrane-association.

This sequence belongs to the beclin family. Component of the PI3K (PI3KC3/PI3K-III/class III phosphatidylinositol 3-kinase) complex. Post-translationally, may be proteolytically processed by caspases; the C-terminal fragment(s) may induce apoptosis.

It is found in the cytoplasm. It localises to the golgi apparatus. The protein localises to the trans-Golgi network membrane. The protein resides in the endosome membrane. Its subcellular location is the endoplasmic reticulum membrane. It is found in the mitochondrion membrane. It localises to the cytoplasmic vesicle. The protein localises to the autophagosome. Plays a central role in autophagy. Acts as core subunit of different PI3K complex forms that mediate formation of phosphatidylinositol 3-phosphate and are believed to play a role in multiple membrane trafficking pathways such as initiation of autophagosomes, maturation of autophagosomes and endocytosis. Involved in regulation of degradative endocytic trafficking and required for the abscission step in cytokinesis, probably in the context of PI3KC3-C2. In Gallus gallus (Chicken), this protein is Beclin-1 (BECN1).